The chain runs to 553 residues: Expansin-like protein 7 (553 aa).

A signal peptide spans 1–19 (MRLLGSLILTLSLIASAFS). Asn-39 carries an N-linked (GlcNAc...) asparagine glycan. Residues 41–139 (SGSCEYGAYN…RKVSCDASGP (99 aa)) form the Expansin-like EG45 domain. Cystine bridges form between Cys-44–Cys-73 and Cys-76–Cys-134. 3 N-linked (GlcNAc...) asparagine glycosylation sites follow: Asn-276, Asn-325, and Asn-406. Disordered regions lie at residues 421 to 447 (GGSG…SSTA) and 460 to 531 (SSSA…DEHH). Low complexity-rich tracts occupy residues 460–476 (SSSA…AGGK) and 484–493 (ISTSGITGSG). The segment covering 497–516 (AASTSKTTSNPTGKTTGMTG) has biased composition (polar residues). The span at 520–531 (DHSESHSSDEHH) shows a compositional bias: basic and acidic residues.

It belongs to the expansin family. Expansin A subfamily.

Its subcellular location is the secreted. May serve to lubricate the movement of the cellulose microfibrils during cell growth and wall extension and/or may serve to maintain the fluid state of the slug cell wall. Overexpression shows aberrant stalk formation. The sequence is that of Expansin-like protein 7 (expl7) from Dictyostelium discoideum (Social amoeba).